The primary structure comprises 174 residues: NADH-ubiquinone oxidoreductase chain 6 (174 aa).

4 helical membrane-spanning segments follow: residues 24 to 44 (LALG…SGLM), 53 to 73 (ILFL…TSLA), 82 to 102 (IKLT…SMIL), and 143 to 163 (FVTI…VKIT).

The protein belongs to the complex I subunit 6 family.

Its subcellular location is the mitochondrion membrane. It carries out the reaction a ubiquinone + NADH + 5 H(+)(in) = a ubiquinol + NAD(+) + 4 H(+)(out). In terms of biological role, core subunit of the mitochondrial membrane respiratory chain NADH dehydrogenase (Complex I) that is believed to belong to the minimal assembly required for catalysis. Complex I functions in the transfer of electrons from NADH to the respiratory chain. The immediate electron acceptor for the enzyme is believed to be ubiquinone. The protein is NADH-ubiquinone oxidoreductase chain 6 (mt:ND6) of Drosophila yakuba (Fruit fly).